Here is a 115-residue protein sequence, read N- to C-terminus: Anamorsin homolog 2 (115 aa).

Residues 30–115 (VKEATKGEDC…KVKLNLTDDI (86 aa)) are disordered. [2Fe-2S] cluster contacts are provided by cysteine 39, cysteine 46, cysteine 49, and cysteine 51. Residues 39–51 (CTTRRRACKNCTC) are fe-S binding site A. 4 residues coordinate [4Fe-4S] cluster: cysteine 77, cysteine 80, cysteine 88, and cysteine 91. Short sequence motifs (cx2C motif) lie at residues 77-80 (CGNC) and 88-91 (CATC). Positions 77 to 91 (CGNCAKGDAFRCATC) are fe-S binding site B.

It belongs to the anamorsin family. Monomer. [2Fe-2S] cluster is required as a cofactor. [4Fe-4S] cluster serves as cofactor.

The protein localises to the cytoplasm. It is found in the mitochondrion intermembrane space. In terms of biological role, component of the cytosolic iron-sulfur (Fe-S) protein assembly (CIA) machinery. Required for the maturation of extramitochondrial Fe-S proteins. Part of an electron transfer chain functioning in an early step of cytosolic Fe-S biogenesis, facilitating the de novo assembly of a [4Fe-4S] cluster on the cytosolic Fe-S scaffold complex. Electrons are transferred from NADPH via a FAD- and FMN-containing diflavin oxidoreductase. Together with the diflavin oxidoreductase, also required for the assembly of the diferric tyrosyl radical cofactor of ribonucleotide reductase (RNR), probably by providing electrons for reduction during radical cofactor maturation in the catalytic small subunit. The protein is Anamorsin homolog 2 of Trypanosoma cruzi (strain CL Brener).